A 342-amino-acid chain; its full sequence is S-adenosylmethionine:tRNA ribosyltransferase-isomerase (342 aa).

This sequence belongs to the QueA family. As to quaternary structure, monomer.

It is found in the cytoplasm. The enzyme catalyses 7-aminomethyl-7-carbaguanosine(34) in tRNA + S-adenosyl-L-methionine = epoxyqueuosine(34) in tRNA + adenine + L-methionine + 2 H(+). The protein operates within tRNA modification; tRNA-queuosine biosynthesis. Transfers and isomerizes the ribose moiety from AdoMet to the 7-aminomethyl group of 7-deazaguanine (preQ1-tRNA) to give epoxyqueuosine (oQ-tRNA). This chain is S-adenosylmethionine:tRNA ribosyltransferase-isomerase, found in Zymomonas mobilis subsp. mobilis (strain ATCC 31821 / ZM4 / CP4).